Consider the following 239-residue polypeptide: Ribose-5-phosphate isomerase A (239 aa).

Substrate contacts are provided by residues 30–33 (SGST), 87–90 (DGAD), and 100–103 (KGGG). Glutamate 109 functions as the Proton acceptor in the catalytic mechanism. Lysine 127 is a substrate binding site.

The protein belongs to the ribose 5-phosphate isomerase family. As to quaternary structure, homodimer.

It carries out the reaction aldehydo-D-ribose 5-phosphate = D-ribulose 5-phosphate. The protein operates within carbohydrate degradation; pentose phosphate pathway; D-ribose 5-phosphate from D-ribulose 5-phosphate (non-oxidative stage): step 1/1. Its function is as follows. Catalyzes the reversible conversion of ribose-5-phosphate to ribulose 5-phosphate. The chain is Ribose-5-phosphate isomerase A from Synechococcus sp. (strain CC9605).